The sequence spans 377 residues: Presenilin-associated rhomboid-like protein, mitochondrial (377 aa).

A mitochondrion-targeting transit peptide spans 1 to 50; that stretch reads MALQGWVQRGWRCGPAWAPPLGGGYRELSATQAPRLLGRRFNLFVQQKCG. Residues 51 to 99 lie on the Mitochondrial matrix side of the membrane; the sequence is FRKAPRKVEPRRSDTGSSGEAYKRSALIPPLEETVFYPSPYPIRTLVKP. A phosphoserine mark is found at Ser-63 and Ser-68. Residues 100–119 form a helical membrane-spanning segment; sequence FFFTIGFTGCAFGSAAIWQY. Residues 120-165 lie on the Mitochondrial intermembrane side of the membrane; that stretch reads ESLKSRVQSYFDGIKADWLDSIRPQKEGNLRKEINKWWNSLSDGQR. The helical transmembrane segment at 166 to 185 threads the bilayer; it reads TVTGIIAANALVFCLWRVPS. Topologically, residues 186–205 are mitochondrial matrix; the sequence is LQRTMIRYFTSNPASKVLCS. The helical transmembrane segment at 206–228 threads the bilayer; that stretch reads PMLLSTFSHFSLFHMAANMYVLW. Over 229-242 the chain is Mitochondrial intermembrane; it reads SFSSSIVNILGQEQ. The helical transmembrane segment at 243–260 threads the bilayer; the sequence is FVAVYLSAGVISNFVSYV. The Mitochondrial matrix portion of the chain corresponds to 261–270; the sequence is CKVATGRYGP. Residues 271–287 traverse the membrane as a helical segment; that stretch reads SLGASGAIMTVLAAVCT. The active-site Nucleophile is the Ser-275. The Mitochondrial intermembrane segment spans residues 288–293; the sequence is KIPEGR. A helical transmembrane segment spans residues 294–316; it reads LAIIFLPVFTFTAGNALKAIIAM. Residues 317-330 lie on the Mitochondrial matrix side of the membrane; that stretch reads DTAGMILGWKFFDH. Residues 331–352 form a helical membrane-spanning segment; it reads AAHLGGALFGIWYITYGHELIW. His-333 is a catalytic residue. At 353–377 the chain is on the mitochondrial intermembrane side; sequence KNREPLVKIWHEIRTNGPKKGGGSK.

This sequence belongs to the peptidase S54 family. Interacts with PSEN1 and PSEN2. Binds OPA1. P-beta is proteolytically processed (beta-cleavage) in a PARL-dependent manner.

Its subcellular location is the mitochondrion inner membrane. The protein localises to the nucleus. The enzyme catalyses Cleaves type-1 transmembrane domains using a catalytic dyad composed of serine and histidine that are contributed by different transmembrane domains.. Required for the control of apoptosis during postnatal growth. Essential for proteolytic processing of an antiapoptotic form of OPA1 which prevents the release of mitochondrial cytochrome c in response to intrinsic apoptotic signals. Required for the maturation of PINK1 into its 52kDa mature form after its cleavage by mitochondrial-processing peptidase (MPP). Promotes cleavage of serine/threonine-protein phosphatase PGAM5 in damaged mitochondria in response to loss of mitochondrial membrane potential. Mediates differential cleavage of PINK1 and PGAM5 depending on the health status of mitochondria, disassociating from PINK1 and associating with PGAM5 in response to mitochondrial membrane potential loss. Required for processing of CLPB into a form with higher protein disaggregase activity by removing an autoinhibitory N-terminal peptide. Promotes processing of DIABLO/SMAC in the mitochondrion which is required for DIABLO apoptotic activity. Also required for cleavage of STARD7 and TTC19. Promotes changes in mitochondria morphology regulated by phosphorylation of P-beta domain. The chain is Presenilin-associated rhomboid-like protein, mitochondrial (Parl) from Mus musculus (Mouse).